A 217-amino-acid chain; its full sequence is Lipoprotein CseA (217 aa).

The N-terminal stretch at 1–34 (MRGLGTESLRARGALKAAIAAVAGLAVLGLSVSA) is a signal peptide. The N-palmitoyl cysteine moiety is linked to residue C35. C35 carries the S-diacylglycerol cysteine lipid modification. Disordered stretches follow at residues 39-66 (GTGA…SPSK) and 192-217 (FSEE…PAPN).

It localises to the cell membrane. In terms of biological role, may be involved in the stabilization of the cell envelope or may interact with the sensor protein CseC to modulate its activity, in response to cell envelope stress. In Streptomyces avermitilis (strain ATCC 31267 / DSM 46492 / JCM 5070 / NBRC 14893 / NCIMB 12804 / NRRL 8165 / MA-4680), this protein is Lipoprotein CseA (cseA).